The sequence spans 677 residues: Transketolase (677 aa).

Residue H27 participates in substrate binding. Thiamine diphosphate-binding positions include H66 and G114–L116. Position 155 (D155) interacts with Mg(2+). Residues G156 and N185 each contribute to the thiamine diphosphate site. Residues N185 and I187 each coordinate Mg(2+). The substrate site is built by H261, R356, and S383. H261 is a thiamine diphosphate binding site. Residues E415 and F442 each coordinate thiamine diphosphate. The active-site Proton donor is E415. H466, D474, and R525 together coordinate substrate.

Belongs to the transketolase family. Homodimer. Requires Mg(2+) as cofactor. Ca(2+) serves as cofactor. Mn(2+) is required as a cofactor. The cofactor is Co(2+). It depends on thiamine diphosphate as a cofactor.

The enzyme catalyses D-sedoheptulose 7-phosphate + D-glyceraldehyde 3-phosphate = aldehydo-D-ribose 5-phosphate + D-xylulose 5-phosphate. In terms of biological role, catalyzes the transfer of a two-carbon ketol group from a ketose donor to an aldose acceptor, via a covalent intermediate with the cofactor thiamine pyrophosphate. In Scheffersomyces stipitis (strain ATCC 58785 / CBS 6054 / NBRC 10063 / NRRL Y-11545) (Yeast), this protein is Transketolase (TKT).